A 388-amino-acid polypeptide reads, in one-letter code: Mannitol-1-phosphate 5-dehydrogenase (388 aa).

An NAD(+)-binding site is contributed by 5–16 (AVHFGGGNIGRG). Lys213 is a catalytic residue.

This sequence belongs to the mannitol dehydrogenase family. In terms of assembly, monomer.

The catalysed reaction is D-mannitol 1-phosphate + NAD(+) = beta-D-fructose 6-phosphate + NADH + H(+). In terms of biological role, catalyzes the NAD(H)-dependent interconversion of D-fructose 6-phosphate and D-mannitol 1-phosphate in the mannitol metabolic pathway. The polypeptide is Mannitol-1-phosphate 5-dehydrogenase (Ajellomyces capsulatus (strain NAm1 / WU24) (Darling's disease fungus)).